Here is a 355-residue protein sequence, read N- to C-terminus: 3'-5' exonuclease (355 aa).

The interval 1-119 (MDKFLIKMPI…TPSPEKVKPE (119 aa)) is disordered. Basic and acidic residues-rich tracts occupy residues 13–29 (KNNE…KETP) and 71–91 (KNLD…ENPP). A phosphoserine mark is found at serine 104 and serine 112. Residues 154 to 315 (TDVDVVPMAF…GQVIYRDLEQ (162 aa)) form the 3'-5' exonuclease domain. Mg(2+) contacts are provided by aspartate 164, glutamate 166, and aspartate 302.

Belongs to the WRNexo family.

It is found in the nucleus. Has exonuclease activity on both single-stranded and duplex templates bearing overhangs, but not blunt ended duplex DNA, and cleaves in a 3'-5' direction. Essential for the formation of DNA replication focal centers. Has an important role in maintaining genome stability. This chain is 3'-5' exonuclease, found in Drosophila persimilis (Fruit fly).